A 288-amino-acid chain; its full sequence is MERPQPDSMPQDLSEALKEATKEVHTQAENAEFMRNFQKGQVTRDGFKLVMASLYHIYVALEEEIERNKESPVFAPVYFPEELHRKAALEQDLAFWYGPRWQEVIPYTPAMQRYVKRLHEVGRTEPELLVAHAYTRYLGDLSGGQVLKKIAQKALDLPSSGEGLAFFTFPNIASATKFKQLYRSRMNSLEMTPAVRQRVIEEAKTAFLLNIQLFEELQELLTHDTKDQSPSRAPGLRQRASNKVQDSAPVETPRGKPPLNTRSQAPLLRWVLTLSFLVATVAVGLYAM.

Topologically, residues 1–265 (MERPQPDSMP…KPPLNTRSQA (265 aa)) are cytoplasmic. Heme b-binding residues include K18, H25, Y134, and R183. The segment at 223-260 (HDTKDQSPSRAPGLRQRASNKVQDSAPVETPRGKPPLN) is disordered. S229 is subject to Phosphoserine. The helical; Anchor for type IV membrane protein transmembrane segment at 266 to 288 (PLLRWVLTLSFLVATVAVGLYAM) threads the bilayer.

The protein belongs to the heme oxygenase family. As to quaternary structure, (Microbial infection) Interacts with SARS-CoV-2 ORF3A protein; the interaction promotes ORF3A-induced autophagy but is unlikely to be involved in ORF3A-mediated induction of reticulophagy. In terms of assembly, homodimer and higher order homooligomer. Oligomerization is crucial for its stability and function in the endoplasmic reticulum. Interacts with FLVCR2; this interaction is potentiated in the presence of heme. A soluble form arises by proteolytic removal of the membrane anchor. As to expression, expressed at higher levels in renal cancer tissue than in normal tissue (at protein level).

The protein localises to the endoplasmic reticulum membrane. It catalyses the reaction heme b + 3 reduced [NADPH--hemoprotein reductase] + 3 O2 = biliverdin IXalpha + CO + Fe(2+) + 3 oxidized [NADPH--hemoprotein reductase] + 3 H2O + H(+). Its function is as follows. Catalyzes the oxidative cleavage of heme at the alpha-methene bridge carbon, released as carbon monoxide (CO), to generate biliverdin IXalpha, while releasing the central heme iron chelate as ferrous iron. Affords protection against programmed cell death and this cytoprotective effect relies on its ability to catabolize free heme and prevent it from sensitizing cells to undergo apoptosis. In terms of biological role, (Microbial infection) During SARS-COV-2 infection, promotes SARS-CoV-2 ORF3A-mediated autophagy but is unlikely to be required for ORF3A-mediated induction of reticulophagy. Functionally, catalyzes the oxidative cleavage of heme at the alpha-methene bridge carbon, released as carbon monoxide (CO), to generate biliverdin IXalpha, while releasing the central heme iron chelate as ferrous iron. In Homo sapiens (Human), this protein is Heme oxygenase 1 (HMOX1).